Here is a 150-residue protein sequence, read N- to C-terminus: Large ribosomal subunit protein uL13 (150 aa).

Belongs to the universal ribosomal protein uL13 family. As to quaternary structure, part of the 50S ribosomal subunit.

Functionally, this protein is one of the early assembly proteins of the 50S ribosomal subunit, although it is not seen to bind rRNA by itself. It is important during the early stages of 50S assembly. The chain is Large ribosomal subunit protein uL13 from Mesoplasma florum (strain ATCC 33453 / NBRC 100688 / NCTC 11704 / L1) (Acholeplasma florum).